We begin with the raw amino-acid sequence, 300 residues long: B3 domain-containing protein At5g57720 (300 aa).

Positions 11 to 105 (PDFLKIFNSH…SFWVRIHRNG (95 aa)) form a DNA-binding region, TF-B3. Residues 115–142 (KIQEISDDEDETNGDGDPHMEEEGDTDE) form a disordered region. Over residues 119–129 (ISDDEDETNGD) the composition is skewed to acidic residues.

It is found in the nucleus. The sequence is that of B3 domain-containing protein At5g57720 from Arabidopsis thaliana (Mouse-ear cress).